A 193-amino-acid polypeptide reads, in one-letter code: Segregation and condensation protein B (193 aa).

It belongs to the ScpB family. Homodimer. Homodimerization may be required to stabilize the binding of ScpA to the Smc head domains. Component of a cohesin-like complex composed of ScpA, ScpB and the Smc homodimer, in which ScpA and ScpB bind to the head domain of Smc. The presence of the three proteins is required for the association of the complex with DNA.

The protein localises to the cytoplasm. Its function is as follows. Participates in chromosomal partition during cell division. May act via the formation of a condensin-like complex containing Smc and ScpA that pull DNA away from mid-cell into both cell halves. This Streptococcus thermophilus (strain CNRZ 1066) protein is Segregation and condensation protein B.